A 594-amino-acid polypeptide reads, in one-letter code: Alanine--tRNA ligase (594 aa).

4 residues coordinate Zn(2+): histidine 456, histidine 460, cysteine 558, and histidine 562.

It belongs to the class-II aminoacyl-tRNA synthetase family. The cofactor is Zn(2+).

Its subcellular location is the cytoplasm. It carries out the reaction tRNA(Ala) + L-alanine + ATP = L-alanyl-tRNA(Ala) + AMP + diphosphate. In terms of biological role, catalyzes the attachment of alanine to tRNA(Ala) in a two-step reaction: alanine is first activated by ATP to form Ala-AMP and then transferred to the acceptor end of tRNA(Ala). Also edits incorrectly charged Ser-tRNA(Ala) and Gly-tRNA(Ala) via its editing domain. The protein is Alanine--tRNA ligase (alaS) of Borreliella burgdorferi (strain ATCC 35210 / DSM 4680 / CIP 102532 / B31) (Borrelia burgdorferi).